The following is a 263-amino-acid chain: Ribonuclease HII (263 aa).

Positions 39–257 constitute an RNase H type-2 domain; it reads AFFTGIDEAG…VKPAAAPHAA (219 aa). Residues aspartate 45, glutamate 46, and aspartate 157 each contribute to the a divalent metal cation site.

This sequence belongs to the RNase HII family. The cofactor is Mn(2+). Requires Mg(2+) as cofactor.

It localises to the cytoplasm. The enzyme catalyses Endonucleolytic cleavage to 5'-phosphomonoester.. Endonuclease that specifically degrades the RNA of RNA-DNA hybrids. This Oleidesulfovibrio alaskensis (strain ATCC BAA-1058 / DSM 17464 / G20) (Desulfovibrio alaskensis) protein is Ribonuclease HII.